The sequence spans 326 residues: MRSLVLLSSVLALVAPSKGAFTWLGTNEAGAEFGEGSYPGELGTEYIWPDLGTIGTLRNEGMNIFRVAFSMERLVPDSLAGPVADEYFQDLVETVNGITALGAYAVLDPHNYGRYYGNIITSTDDFAAFWTILATEFASNELVIFDTNNEYHTMDQSLVLNLNQAAIDAIRASGATSQYIFAEGNSWTGAWTWVDVNDNMKALTDPQDKLIYEMHQYLDSDGSGTNTACVSSTIGSERVTAATNWLRENGKLGVLGEFAGANNQVCKDAVADLLEYLEENSDVWLGALWWAAGPWWGDYMFNMEPTSGIAYQEYSEILQPYFVGSQ.

A signal peptide spans 1 to 19 (MRSLVLLSSVLALVAPSKG). The active-site Proton donor is E150. Catalysis depends on E257, which acts as the Nucleophile.

Belongs to the glycosyl hydrolase 5 (cellulase A) family.

It localises to the secreted. The catalysed reaction is Endohydrolysis of (1-&gt;4)-beta-D-glucosidic linkages in cellulose, lichenin and cereal beta-D-glucans.. In terms of biological role, has endoglucanase activity on substrates containing beta-1,4 glycosidic bonds, like in carboxymethylcellulose (CMC), hydroxyethylcellulose (HEC) and beta-glucan. Involved in the degradation of complex natural cellulosic substrates. The sequence is that of Endo-beta-1,4-glucanase A (eglA) from Emericella nidulans (strain FGSC A4 / ATCC 38163 / CBS 112.46 / NRRL 194 / M139) (Aspergillus nidulans).